Consider the following 600-residue polypeptide: Elongation factor 4 (600 aa).

The 183-residue stretch at 5-187 folds into the tr-type G domain; it reads KYIRNFSIIA…AIVNKLPPPK (183 aa). GTP contacts are provided by residues 17–22 and 134–137; these read DHGKST and NKID.

This sequence belongs to the TRAFAC class translation factor GTPase superfamily. Classic translation factor GTPase family. LepA subfamily.

It localises to the cell inner membrane. It catalyses the reaction GTP + H2O = GDP + phosphate + H(+). Required for accurate and efficient protein synthesis under certain stress conditions. May act as a fidelity factor of the translation reaction, by catalyzing a one-codon backward translocation of tRNAs on improperly translocated ribosomes. Back-translocation proceeds from a post-translocation (POST) complex to a pre-translocation (PRE) complex, thus giving elongation factor G a second chance to translocate the tRNAs correctly. Binds to ribosomes in a GTP-dependent manner. In Rickettsia bellii (strain OSU 85-389), this protein is Elongation factor 4.